A 378-amino-acid chain; its full sequence is Forkhead box protein F1 (378 aa).

The tract at residues 1 to 45 (MSAPDKQQPPHGGGTGGGGGAGGQAMDPAAAGPTKAKKTNAGVRR) is disordered. Residues 11-23 (HGGGTGGGGGAGG) show a composition bias toward gly residues. Low complexity predominate over residues 24–42 (QAMDPAAAGPTKAKKTNAG). A DNA-binding region (fork-head) is located at residues 47-138 (EKPPYSYIAL…EFMFEEGSFR (92 aa)).

Expressed primarily in lung in alveolar type II pneumocyte cells, and to a lesser extent in placenta, stomach, intestine and colon.

The protein resides in the nucleus. In terms of biological role, probable transcription activator for a number of lung-specific genes. This is Forkhead box protein F1 (Foxf1) from Mus musculus (Mouse).